A 37-amino-acid chain; its full sequence is NAD-reducing hydrogenase HoxS subunit alpha (37 aa).

This sequence belongs to the complex I 51 kDa subunit family. Tetramer of an alpha and a gamma subunits (flavin-containing dimer), and a delta and a nickel-containing beta subunits (hydrogenase dimer). FMN serves as cofactor. The cofactor is [4Fe-4S] cluster.

The protein resides in the cytoplasm. It carries out the reaction H2 + NAD(+) = NADH + H(+). Subunits alpha and gamma of HoxS constitute an NADH--oxidoreductase. This is NAD-reducing hydrogenase HoxS subunit alpha (hoxF) from Rhodococcus opacus (Nocardia opaca).